The sequence spans 408 residues: Na(+)-translocating NADH-quinone reductase subunit F (408 aa).

A helical transmembrane segment spans residues 4–24 (IYLGVGMFTIIVLVLVAIIMF). The 2Fe-2S ferredoxin-type domain maps to 33–127 (GDVEILINDD…DMEIELPEEV (95 aa)). [2Fe-2S] cluster is bound by residues cysteine 70, cysteine 76, cysteine 79, and cysteine 111. The FAD-binding FR-type domain maps to 130 to 270 (IRKWDCTVKS…SGPFGEFFAK (141 aa)).

The protein belongs to the NqrF family. In terms of assembly, composed of six subunits; NqrA, NqrB, NqrC, NqrD, NqrE and NqrF. [2Fe-2S] cluster is required as a cofactor. FAD serves as cofactor.

The protein localises to the cell inner membrane. It catalyses the reaction a ubiquinone + n Na(+)(in) + NADH + H(+) = a ubiquinol + n Na(+)(out) + NAD(+). In terms of biological role, NQR complex catalyzes the reduction of ubiquinone-1 to ubiquinol by two successive reactions, coupled with the transport of Na(+) ions from the cytoplasm to the periplasm. The first step is catalyzed by NqrF, which accepts electrons from NADH and reduces ubiquinone-1 to ubisemiquinone by a one-electron transfer pathway. This Idiomarina loihiensis (strain ATCC BAA-735 / DSM 15497 / L2-TR) protein is Na(+)-translocating NADH-quinone reductase subunit F.